Consider the following 404-residue polypeptide: Protein translocase subunit SecF (404 aa).

6 consecutive transmembrane segments (helical) span residues 15–35, 225–245, 246–266, 275–295, 327–347, and 355–375; these read KWYFLAFSLVFSVAGLISMGA, LLATLYSLGGMLVYLWFRFEL, IYGIGAVVACFHDTIITVGAF, LTVVAAILTLIGYSMNDTIVV, ILTSGLTFLTVLSLYVFGGEV, and LVIGILIGTYSSIAVAAPMLV.

This sequence belongs to the SecD/SecF family. SecF subfamily. In terms of assembly, forms a complex with SecD. Part of the essential Sec protein translocation apparatus which comprises SecA, SecYEG and auxiliary proteins SecDF. Other proteins may also be involved.

It localises to the cell inner membrane. In terms of biological role, part of the Sec protein translocase complex. Interacts with the SecYEG preprotein conducting channel. SecDF uses the proton motive force (PMF) to complete protein translocation after the ATP-dependent function of SecA. This chain is Protein translocase subunit SecF, found in Koribacter versatilis (strain Ellin345).